Reading from the N-terminus, the 388-residue chain is Chorismate synthase (388 aa).

Residues arginine 39 and arginine 45 each coordinate NADP(+). Residues 130 to 132, 251 to 252, glycine 296, 311 to 315, and arginine 337 each bind FMN; these read RSS, NA, and KPIPT.

It belongs to the chorismate synthase family. In terms of assembly, homotetramer. FMNH2 serves as cofactor.

The catalysed reaction is 5-O-(1-carboxyvinyl)-3-phosphoshikimate = chorismate + phosphate. It functions in the pathway metabolic intermediate biosynthesis; chorismate biosynthesis; chorismate from D-erythrose 4-phosphate and phosphoenolpyruvate: step 7/7. Catalyzes the anti-1,4-elimination of the C-3 phosphate and the C-6 proR hydrogen from 5-enolpyruvylshikimate-3-phosphate (EPSP) to yield chorismate, which is the branch point compound that serves as the starting substrate for the three terminal pathways of aromatic amino acid biosynthesis. This reaction introduces a second double bond into the aromatic ring system. This is Chorismate synthase from Lactococcus lactis subsp. cremoris (strain MG1363).